The chain runs to 679 residues: MISATRAAAARLVGTAASRTPAAARHQDGWNGLSHEAFRFVSRRDYASETIKGAVVGIDLGTTNSCVAVMEGKQAKVLENAEGARTTPSVVAFTADGERLVGMPAKRQAVTNPNNTFYATKRLIGRRYDDPEVQKDTKNVPFKIVRASNGDAWVEAHGKLYSPSQIGAFVLMKMKETAENYLGHTAKNAVITVPAYFNDSQRQATKDAGQISGLNVLRVINEPTAAALAYGLDKSEDKIIAVYDLGGGTFDISILEIQKGVFEVKSTNGDTFLGGEDFDQALLRHIVKEFKRETGVDLTKDNMALQRVREAAEKAKCELSSSVQTDINLPYLTMDASGPKHLNMKLTRAQFEGIVTDLIKRTIAPCQKAMQDAEVSKSDIGEVILVGGMTRMPKVQQTVQDLFGRAPSKAVNPDEAVAIGAAIQGGVLAGDVTDVLLLDVTPLSLGIETLGGVFTKLINRNTTIPTKKSQVFSTAADGQTQVEIKVCQGEREMAGDNKLLGQFTLIGIPPAPRGVPQIEVTFDLDANGIVHVSAKDKGTGREQQIVIQSSGGLSKDDIENMVKNAEKYAEEDRRKKERVEAVNMAEGIIHDTETKMEEFKDQLPADECNKLKEEISKMRELLARKDSETGENIRQAASSLQQASLKLFEMAYKKMASEREGSGSSGTGEQKEDQKEEKQ.

The N-terminal 46 residues, 1-46, are a transit peptide targeting the mitochondrion; sequence MISATRAAAARLVGTAASRTPAAARHQDGWNGLSHEAFRFVSRRDY. The segment at 1–432 is interaction with NFS1; that stretch reads MISATRAAAA…IQGGVLAGDV (432 aa). ADP is bound by residues T63 and N64. The interval 63-431 is nucleotide-binding domain (NBD); that stretch reads TNSCVAVMEG…AIQGGVLAGD (369 aa). K76 bears the N6-acetyllysine mark. At T87 the chain carries Phosphothreonine. N6-acetyllysine; alternate is present on residues K135 and K138. K135 and K138 each carry N6-succinyllysine; alternate. K143 carries the N6-acetyllysine modification. Position 206 is an N6-acetyllysine; alternate (K206). An N6-succinyllysine; alternate modification is found at K206. K206 carries the N6-malonyllysine; alternate modification. N6-acetyllysine is present on residues K234 and K288. K300 carries the post-translational modification N6-acetyllysine; alternate. K300 bears the N6-succinyllysine; alternate mark. ADP contacts are provided by E313, K316, and S320. N6-acetyllysine; alternate is present on K360. K360 is modified (N6-succinyllysine; alternate). At K368 the chain carries N6-succinyllysine. ADP contacts are provided by G388 and R391. An N6-succinyllysine modification is found at K394. Residue S408 is modified to Phosphoserine. The interval 432 to 441 is interdomain linker; it reads VTDVLLLDVT. Positions 432-679 are interaction with FXN and ISCU; that stretch reads VTDVLLLDVT…QKEDQKEEKQ (248 aa). The interval 442–679 is substrate-binding domain (SBD); sequence PLSLGIETLG…QKEDQKEEKQ (238 aa). R513 carries the omega-N-methylarginine modification. Residues K567 and K600 each carry the N6-acetyllysine; alternate modification. N6-succinyllysine; alternate is present on residues K567 and K600. K610 is subject to N6-succinyllysine. K612 is modified (N6-acetyllysine). Position 646 is an N6-acetyllysine; alternate (K646). K646 is modified (N6-succinyllysine; alternate). The tract at residues 656–679 is disordered; that stretch reads ASEREGSGSSGTGEQKEDQKEEKQ. Residues 669 to 679 are compositionally biased toward basic and acidic residues; the sequence is EQKEDQKEEKQ.

The protein belongs to the heat shock protein 70 family. Interacts strongly with the intermediate form of FXN and weakly with its mature form. Interacts with HSCB. Associates with the mitochondrial contact site and cristae organizing system (MICOS) complex, composed of at least MICOS10/MIC10, CHCHD3/MIC19, CHCHD6/MIC25, APOOL/MIC27, IMMT/MIC60, APOO/MIC23/MIC26 and QIL1/MIC13. This complex was also known under the names MINOS or MitOS complex. The MICOS complex associates with mitochondrial outer membrane proteins SAMM50, MTX1, MTX2 and DNAJC11, mitochondrial inner membrane protein TMEM11 and with HSPA9. Interacts with DNLZ, the interaction is required to prevent self-aggregation. Interacts with TESPA1. Interacts with PDPN. Interacts with NFU1, NFS1 and ISCU. Interacts with TP53; the interaction promotes TP53 degradation. Interacts (via SBD domain) with UBXN2A; the interaction with UBXN2A inhibits HSPA9/MOT-2 interaction with and degradation of TP53, thereby promotes TP53 translocation to the nucleus. Interacts with ITPR1 AND VDAC1; this interaction couples ITPR1 to VDAC1. Component of the TIM23 mitochondrial inner membrane pre-sequence translocase complex.

It is found in the mitochondrion. The protein resides in the nucleus. Its subcellular location is the nucleolus. It localises to the cytoplasm. The protein localises to the mitochondrion matrix. It carries out the reaction ATP + H2O = ADP + phosphate + H(+). Its activity is regulated as follows. The chaperone activity is regulated by ATP-induced allosteric coupling of the nucleotide-binding (NBD) and substrate-binding (SBD) domains. ATP binding in the NBD leads to a conformational change in the NBD, which is transferred through the interdomain linker (IDL) to the substrate-binding domain (SBD). This elicits a reduced substrate affinity and a faster substrate exchange rate. Upon hydrolysis of ATP to ADP, the protein undergoes a conformational change that increases its affinity for substrate proteins. It cycles through repeated phases of ATP hydrolysis and nucleotide exchange, facilitating repeated cycles of substrate binding and release. Functions in collaboration with co-chaperones. Functions with the co-chaperone, DNLZ, to maintain solubility and regulate ATP hydrolysis. Nucleotide exchange factors, GRPEL1 and GRPEL2, accelerate nucleotide exchange. Functionally, mitochondrial chaperone that plays a key role in mitochondrial protein import, folding, and assembly. Plays an essential role in the protein quality control system, the correct folding of proteins, the re-folding of misfolded proteins, and the targeting of proteins for subsequent degradation. These processes are achieved through cycles of ATP binding, ATP hydrolysis, and ADP release, mediated by co-chaperones. In mitochondria, it associates with the TIM (translocase of the inner membrane) protein complex to assist in the import and folding of mitochondrial proteins. Plays an important role in mitochondrial iron-sulfur cluster (ISC) biogenesis, interacts with and stabilizes ISC cluster assembly proteins FXN, NFU1, NFS1 and ISCU. Regulates erythropoiesis via stabilization of ISC assembly. Regulates mitochondrial calcium-dependent apoptosis by coupling two calcium channels, ITPR1 and VDAC1, at the mitochondria-associated endoplasmic reticulum (ER) membrane to facilitate calcium transport from the ER lumen to the mitochondria intermembrane space, providing calcium for the downstream calcium channel MCU, which releases it into the mitochondrial matrix. Although primarily located in the mitochondria, it is also found in other cellular compartments. In the cytosol, it associates with proteins involved in signaling, apoptosis, or senescence. It may play a role in cell cycle regulation via its interaction with and promotion of degradation of TP53. May play a role in the control of cell proliferation and cellular aging. Protects against reactive oxygen species (ROS). Extracellular HSPA9 plays a cytoprotective role by preventing cell lysis following immune attack by the membrane attack complex by disrupting formation of the complex. The protein is Stress-70 protein, mitochondrial of Cricetulus griseus (Chinese hamster).